The following is a 300-amino-acid chain: Small ribosomal subunit biogenesis GTPase RsgA (300 aa).

Positions 69 to 231 (RSDEMRVKQF…LIDSPGFQAF (163 aa)) constitute a CP-type G domain. GTP-binding positions include 119–122 (NKID) and 172–180 (GQSGMGKST). 4 residues coordinate Zn(2+): Cys-255, Cys-260, His-262, and Cys-268.

The protein belongs to the TRAFAC class YlqF/YawG GTPase family. RsgA subfamily. Monomer. Associates with 30S ribosomal subunit, binds 16S rRNA. Zn(2+) is required as a cofactor.

Its subcellular location is the cytoplasm. Its function is as follows. One of several proteins that assist in the late maturation steps of the functional core of the 30S ribosomal subunit. Helps release RbfA from mature subunits. May play a role in the assembly of ribosomal proteins into the subunit. Circularly permuted GTPase that catalyzes slow GTP hydrolysis, GTPase activity is stimulated by the 30S ribosomal subunit. The polypeptide is Small ribosomal subunit biogenesis GTPase RsgA (Bordetella bronchiseptica (strain ATCC BAA-588 / NCTC 13252 / RB50) (Alcaligenes bronchisepticus)).